Consider the following 1385-residue polypeptide: Defecation cycle abnormal dec-7 (1385 aa).

Positions 1–19 are cleaved as a signal peptide; that stretch reads MWTARHAVALLVVLTYAYS. A glycan (N-linked (GlcNAc...) asparagine) is linked at N156. A disordered region spans residues 234–262; the sequence is SQTNYGAPNYQQAGAQSAANQQFSNPSQY. Low complexity predominate over residues 242 to 261; that stretch reads NYQQAGAQSAANQQFSNPSQ. Residues 285 to 450 enclose the NIDO domain; sequence QIYGKRKKRQ…GRWIHRVDEV (166 aa). 7 N-linked (GlcNAc...) asparagine glycosylation sites follow: N313, N386, N413, N458, N480, N562, and N583. One can recognise an AMOP domain in the interval 681–840; sequence GRNWPIDMCI…DHCEFYYWRR (160 aa). Positions 852–1088 constitute a VWFD domain; it reads AAGYIYGEPH…FWKIDGTNDK (237 aa). N-linked (GlcNAc...) asparagine glycans are attached at residues N909, N921, N975, N1009, and N1124. The Sushi domain occupies 1179-1238; the sequence is ISCGPLLKKEGVVKTPPAANYLDGDKVVFSCKPKYYIHGDIERVCRNGTWSPGWWAWCRD. 2 cysteine pairs are disulfide-bonded: C1181/C1223 and C1209/C1236. N1225 carries N-linked (GlcNAc...) asparagine glycosylation. The chain crosses the membrane as a helical span at residues 1251 to 1271; it reads LLSIFGISLIFVIFFCILWNI. The interval 1321 to 1385 is disordered; it reads MNQPSRPIPS…GNMRFETSAI (65 aa).

Highly expressed in the intestinal epithelia.

Its subcellular location is the membrane. It is found in the cell junction. Its function is as follows. May negatively regulate activity of innexin gap junction protein inx-16, thereby mediating the rhythmic frequency of the defecation motor program. Required for the clustering of inx-16 to the cell-cell junction of the intestinal epithelia. Probably dispensable for intestinal integrity. May be a cytokine receptor. This Caenorhabditis elegans protein is Defecation cycle abnormal dec-7.